The primary structure comprises 273 residues: Cell division protein FtsQ (273 aa).

Residues 1–20 are Cytoplasmic-facing; sequence MPPRKAHTTRRTPAKKSGVR. The chain crosses the membrane as a helical span at residues 21–43; it reads RRLLRLLVTGVPVLALCGVAWLW. Over 44 to 273 the chain is Periplasmic; the sequence is LESVRLTRIE…STQKSAMGHE (230 aa). Positions 47–115 constitute a POTRA domain; sequence VRLTRIEIVG…GTLRIAVEER (69 aa).

Belongs to the FtsQ/DivIB family. FtsQ subfamily.

It is found in the cell inner membrane. Its function is as follows. Essential cell division protein. The protein is Cell division protein FtsQ of Rhodothermus marinus (strain ATCC 43812 / DSM 4252 / R-10) (Rhodothermus obamensis).